Here is a 504-residue protein sequence, read N- to C-terminus: Paired zinc finger protein 1 (504 aa).

2 C2H2-type zinc fingers span residues Leu12–His35 and His39–His62. The segment at Phe68–Lys91 adopts a C2H2-type 3; degenerate zinc-finger fold. Disordered regions lie at residues Ala115–Pro136 and Ile154–Gly173. Residues Arg159 to Ser172 show a composition bias toward polar residues. 2 C2H2-type zinc fingers span residues Ile179 to His202 and His206 to His229. The C2H2-type 6; degenerate zinc-finger motif lies at Tyr235–Lys258. Residues Leu309–His332 form a C2H2-type 7 zinc finger. A C2H2-type 8; degenerate zinc finger spans residues Phe365–Lys389.

Expressed in proximal gonad.

In terms of biological role, possible transcriptional regulator. Involved in promoting segregation of chromosomes during meiosis, perhaps acting downstream of the let-60 RAS / mpk-1 MAPK signaling pathway. This chain is Paired zinc finger protein 1, found in Caenorhabditis elegans.